A 217-amino-acid chain; its full sequence is Protein matrimony (217 aa).

A POLO box domain (PBD)-binding motif is present at residues 39–41; sequence STP. 2 positions are modified to phosphoserine: serine 63 and serine 66. The tract at residues 83 to 106 is disordered; that stretch reads KQQQQQQHQHCHRTQLKPPPFVLP. In terms of domain architecture, SAM spans 157–217; that stretch reads NHAANVEQIL…NRIMDVLHTL (61 aa).

Interacts with polo. Interacts with cort. In terms of processing, probably ubiquitinated: degraded during the oocyte-to-embryo transition by the anaphase promoting complex/cyclosome (APC/C) containing cort protein.

The protein resides in the nucleus. The protein localises to the chromosome. Functionally, polo kinase inhibitor required to maintain G2 arrest in the meiotic cell cycle in females. Holds heterochromatically paired homologs together from the end of pachytene until metaphase I. Haploinsufficient locus for homologous achiasmate segregation and may be required for the maintenance of heterochromatic pairings. In Drosophila melanogaster (Fruit fly), this protein is Protein matrimony.